Consider the following 821-residue polypeptide: PX domain-containing protein C1450.12 (821 aa).

The 140-residue stretch at 171 to 310 folds into the PX domain; sequence AYVLGVRQST…SFLTDDPVTL (140 aa). The tract at residues 235 to 271 is disordered; the sequence is KDDHDTYLNSSEDSTLSPLPSRSSDTNDPQSDSQHVL. The segment covering 241-268 has biased composition (polar residues); it reads YLNSSEDSTLSPLPSRSSDTNDPQSDSQ. A phosphothreonine mark is found at T260 and T597. 2 stretches are compositionally biased toward acidic residues: residues 737–746 and 754–766; these read GDEDDQDEND and EHME…EEFD. A disordered region spans residues 737 to 766; sequence GDEDDQDENDQVTKVEEEHMEDDDSVEEFD. Residue S761 is modified to Phosphoserine.

It is found in the mitochondrion membrane. In Schizosaccharomyces pombe (strain 972 / ATCC 24843) (Fission yeast), this protein is PX domain-containing protein C1450.12.